The following is a 410-amino-acid chain: LL-diaminopimelate aminotransferase (410 aa).

Substrate contacts are provided by tyrosine 15 and glycine 42. Pyridoxal 5'-phosphate is bound by residues tyrosine 72, 108-109 (SK), tyrosine 132, asparagine 187, tyrosine 218, and 246-248 (SFS). Residues lysine 109, tyrosine 132, and asparagine 187 each coordinate substrate. Lysine 249 is subject to N6-(pyridoxal phosphate)lysine. Residues arginine 257 and asparagine 292 each coordinate pyridoxal 5'-phosphate. Residues asparagine 292 and arginine 388 each coordinate substrate.

The protein belongs to the class-I pyridoxal-phosphate-dependent aminotransferase family. LL-diaminopimelate aminotransferase subfamily. Homodimer. Requires pyridoxal 5'-phosphate as cofactor.

The catalysed reaction is (2S,6S)-2,6-diaminopimelate + 2-oxoglutarate = (S)-2,3,4,5-tetrahydrodipicolinate + L-glutamate + H2O + H(+). The protein operates within amino-acid biosynthesis; L-lysine biosynthesis via DAP pathway; LL-2,6-diaminopimelate from (S)-tetrahydrodipicolinate (aminotransferase route): step 1/1. Functionally, involved in the synthesis of meso-diaminopimelate (m-DAP or DL-DAP), required for both lysine and peptidoglycan biosynthesis. Catalyzes the direct conversion of tetrahydrodipicolinate to LL-diaminopimelate. The sequence is that of LL-diaminopimelate aminotransferase from Geobacter sulfurreducens (strain ATCC 51573 / DSM 12127 / PCA).